The following is a 263-amino-acid chain: Glycerol uptake facilitator protein (263 aa).

Over 1-7 the chain is Cytoplasmic; the sequence is MNIYRKK. A helical transmembrane segment spans residues 8 to 36; sequence NIIKKCFMEFFGTGLVMFFGIGCLAASKL. At 37–41 the chain is on the extracellular side; the sequence is TNANF. A helical transmembrane segment spans residues 42-62; it reads TQFEISCIWGFGVSIAIYFSS. Residues 63–65 are Cytoplasmic-facing; that stretch reads SIS. An intramembrane segment occupies 66–69; the sequence is GAHL. The short motif at 70 to 72 is the NPA 1 element; sequence NPA. Residues 70–80 constitute an intramembrane region (helical); the sequence is NPAVTIFFWLS. Over 81-86 the chain is Cytoplasmic; sequence SKLNKR. Residues 87–110 form a helical membrane-spanning segment; that stretch reads KVLPYIISQTLGSFFFTMLTYYLY. Residues 111–145 lie on the Extracellular side of the membrane; the sequence is NNLLISFERNNNVVRGTQESLNLASIFCVYPNYNN. The chain crosses the membrane as a helical span at residues 146–171; sequence SFIYDFIIEIFSTALFILIVLEFNNR. Residues 172 to 181 lie on the Cytoplasmic side of the membrane; sequence NSNYFLYNRS. A helical transmembrane segment spans residues 182–198; that stretch reads VAPILTGFLVCMINLVI. Topologically, residues 199 to 202 are extracellular; it reads NPLN. The stretch at 203–206 is an intramembrane region; that stretch reads NISL. The short motif at 207-209 is the NPA 2 element; sequence NPA. Residues 207–220 constitute an intramembrane region (helical); it reads NPARDLGPKILLSL. Residues 221 to 236 are Extracellular-facing; sequence TGWGLFSFTGGNDNIL. A helical transmembrane segment spans residues 237-259; sequence YCFIPIMGPILGANLGGWIHKTL. The Cytoplasmic portion of the chain corresponds to 260–263; it reads INNS.

This sequence belongs to the MIP/aquaporin (TC 1.A.8) family.

It localises to the cell membrane. It carries out the reaction glycerol(in) = glycerol(out). Its function is as follows. Mediates glycerol diffusion across the cytoplasmic membrane via a pore-type mechanism. The chain is Glycerol uptake facilitator protein (glpF) from Buchnera aphidicola subsp. Acyrthosiphon pisum (strain APS) (Acyrthosiphon pisum symbiotic bacterium).